Here is a 129-residue protein sequence, read N- to C-terminus: Small ribosomal subunit protein uS11 (129 aa).

Belongs to the universal ribosomal protein uS11 family. As to quaternary structure, part of the 30S ribosomal subunit. Interacts with proteins S7 and S18. Binds to IF-3.

Its function is as follows. Located on the platform of the 30S subunit, it bridges several disparate RNA helices of the 16S rRNA. Forms part of the Shine-Dalgarno cleft in the 70S ribosome. In Sinorhizobium medicae (strain WSM419) (Ensifer medicae), this protein is Small ribosomal subunit protein uS11.